The following is a 167-amino-acid chain: Small ribosomal subunit protein uS5 (167 aa).

Residues 11-74 enclose the S5 DRBM domain; sequence LQEKLIAVNR…EKARRAMINV (64 aa).

It belongs to the universal ribosomal protein uS5 family. In terms of assembly, part of the 30S ribosomal subunit. Contacts proteins S4 and S8.

In terms of biological role, with S4 and S12 plays an important role in translational accuracy. Its function is as follows. Located at the back of the 30S subunit body where it stabilizes the conformation of the head with respect to the body. The polypeptide is Small ribosomal subunit protein uS5 (Yersinia enterocolitica serotype O:8 / biotype 1B (strain NCTC 13174 / 8081)).